Consider the following 418-residue polypeptide: Acyl-[acyl-carrier-protein] desaturase 4, chloroplastic (418 aa).

A chloroplast-targeting transit peptide spans 1–70; it reads MASSGLAVAA…ATAAAPADTA (70 aa). Residues E152, E190, H193, E243, E276, and H279 each coordinate Fe cation.

The protein belongs to the fatty acid desaturase type 2 family. In terms of assembly, homodimer. Fe(2+) serves as cofactor.

The protein localises to the plastid. The protein resides in the chloroplast. It functions in the pathway lipid metabolism; fatty acid metabolism. In terms of biological role, introduces a cis double bond in the acyl chain of an acyl-[acyl-carrier protein]. The protein is Acyl-[acyl-carrier-protein] desaturase 4, chloroplastic of Oryza sativa subsp. japonica (Rice).